Reading from the N-terminus, the 104-residue chain is Protein RnfH (104 aa).

Positions 80-104 (PLTADPKLNRKRRAKEKASAGKASN) are disordered.

The protein belongs to the UPF0125 (RnfH) family.

In Alcanivorax borkumensis (strain ATCC 700651 / DSM 11573 / NCIMB 13689 / SK2), this protein is Protein RnfH.